A 330-amino-acid polypeptide reads, in one-letter code: Aspartate--ammonia ligase (330 aa).

This sequence belongs to the class-II aminoacyl-tRNA synthetase family. AsnA subfamily.

It localises to the cytoplasm. It carries out the reaction L-aspartate + NH4(+) + ATP = L-asparagine + AMP + diphosphate + H(+). It functions in the pathway amino-acid biosynthesis; L-asparagine biosynthesis; L-asparagine from L-aspartate (ammonia route): step 1/1. This Yersinia enterocolitica serotype O:8 / biotype 1B (strain NCTC 13174 / 8081) protein is Aspartate--ammonia ligase.